A 564-amino-acid polypeptide reads, in one-letter code: Poly(U)-binding-splicing factor PUF60 (564 aa).

The tract at residues 1-521 (MATATIALQV…EDAEIIVKIF (521 aa)) is inhibits homodimerization. Residues 37–61 (KWKPPQGTESIKMENGQSTGTKLGL) are disordered. Residue Lys-48 forms a Glycyl lysine isopeptide (Lys-Gly) (interchain with G-Cter in SUMO2) linkage. The residue at position 65 (Thr-65) is a Phosphothreonine. The tract at residues 82-564 (QSIKSVLVKQ…ERFDNSDLSA (483 aa)) is inhibits transcriptional repression, interaction with ERCC3 and apoptosis induction. A Glycyl lysine isopeptide (Lys-Gly) (interchain with G-Cter in SUMO2) cross-link involves residue Lys-85. Phosphoserine is present on Ser-117. RRM domains follow at residues 134–212 (CRVY…RPSN) and 231–309 (NRIY…KAVT). Residue Ser-249 is modified to Phosphoserine. Residue Lys-256 is modified to N6-acetyllysine. Thr-319 is subject to Phosphothreonine. The tract at residues 421–442 (KKEKEEEELFPESERPEMLSEQ) is disordered. Lys-424 is covalently cross-linked (Glycyl lysine isopeptide (Lys-Gly) (interchain with G-Cter in SUMO2)). A compositionally biased stretch (basic and acidic residues) spans 432-442 (ESERPEMLSEQ). Lys-459 carries the N6-acetyllysine modification. A Glycyl lysine isopeptide (Lys-Gly) (interchain with G-Cter in SUMO2) cross-link involves residue Lys-463. The 88-residue stretch at 467-554 (TVMVLRNMVD…RKVVAEVYDQ (88 aa)) folds into the RRM 3; atypical domain.

This sequence belongs to the RRM half pint family. In terms of assembly, homodimer. Associates with the spliceosome. Found in a complex with RO60 and Y5 RNA. Found in a complex with FUBP1 and far upstream element (FUSE) DNA segment. Interacts directly with ERCC3. Interacts with CDK7 and GTF2H1. Interacts with SRSF11/P54. Interacts with ARGLU1; interaction may be involved in ARGLU1-mediated modulation of alternative splicing.

It localises to the nucleus. Functionally, DNA- and RNA-binding protein, involved in several nuclear processes such as pre-mRNA splicing, apoptosis and transcription regulation. In association with FUBP1 regulates MYC transcription at the P2 promoter through the core-TFIIH basal transcription factor. Acts as a transcriptional repressor through the core-TFIIH basal transcription factor. Represses FUBP1-induced transcriptional activation but not basal transcription. Decreases ERCC3 helicase activity. Is also involved in pre-mRNA splicing. Promotes splicing of an intron with weak 3'-splice site and pyrimidine tract in a cooperative manner with U2AF2. Involved in apoptosis induction when overexpressed in HeLa cells. Modulates alternative splicing of several mRNAs. Binds to relaxed DNA of active promoter regions. Binds to the pyrimidine tract and 3'-splice site regions of pre-mRNA; binding is enhanced in presence of U2AF2. Binds to Y5 RNA in association with RO60. Binds to poly(U) RNA. This Rattus norvegicus (Rat) protein is Poly(U)-binding-splicing factor PUF60.